The sequence spans 22 residues: Caerin-3.2 (22 aa).

Lys22 carries the post-translational modification Lysine amide.

Expressed by the skin parotoid and/or rostral glands.

The protein resides in the secreted. Antibacterial peptide, that adopts an alpha helical conformation which can disrupt bacterial membranes. Each caerin displays a different antimicrobial specificity. The chain is Caerin-3.2 from Ranoidea caerulea (Green tree frog).